The primary structure comprises 183 residues: Segregation and condensation protein B (183 aa).

Belongs to the ScpB family. Homodimer. Homodimerization may be required to stabilize the binding of ScpA to the Smc head domains. Component of a cohesin-like complex composed of ScpA, ScpB and the Smc homodimer, in which ScpA and ScpB bind to the head domain of Smc. The presence of the three proteins is required for the association of the complex with DNA.

The protein resides in the cytoplasm. Its function is as follows. Participates in chromosomal partition during cell division. May act via the formation of a condensin-like complex containing Smc and ScpA that pull DNA away from mid-cell into both cell halves. This chain is Segregation and condensation protein B, found in Streptococcus pyogenes serotype M12 (strain MGAS2096).